We begin with the raw amino-acid sequence, 190 residues long: Protein GrpE (190 aa).

Residues 1-10 are compositionally biased toward basic and acidic residues; it reads MKKHVTEEQK. Residues 1–42 form a disordered region; sequence MKKHVTEEQKTSAAPEAEQASPESSAAEAATPEERISRLEEQ. Residues 12–30 are compositionally biased toward low complexity; that stretch reads SAAPEAEQASPESSAAEAA. A compositionally biased stretch (basic and acidic residues) spans 32 to 42; that stretch reads PEERISRLEEQ.

It belongs to the GrpE family. As to quaternary structure, homodimer.

The protein resides in the cytoplasm. In terms of biological role, participates actively in the response to hyperosmotic and heat shock by preventing the aggregation of stress-denatured proteins, in association with DnaK and GrpE. It is the nucleotide exchange factor for DnaK and may function as a thermosensor. Unfolded proteins bind initially to DnaJ; upon interaction with the DnaJ-bound protein, DnaK hydrolyzes its bound ATP, resulting in the formation of a stable complex. GrpE releases ADP from DnaK; ATP binding to DnaK triggers the release of the substrate protein, thus completing the reaction cycle. Several rounds of ATP-dependent interactions between DnaJ, DnaK and GrpE are required for fully efficient folding. This is Protein GrpE from Pelobacter propionicus (strain DSM 2379 / NBRC 103807 / OttBd1).